We begin with the raw amino-acid sequence, 358 residues long: Chorismate synthase (358 aa).

The NADP(+) site is built by R46 and R52. FMN is bound by residues 123–125 (RSS), 239–240 (NA), G283, 298–302 (KSVAT), and R324.

It belongs to the chorismate synthase family. Homotetramer. FMNH2 serves as cofactor.

It catalyses the reaction 5-O-(1-carboxyvinyl)-3-phosphoshikimate = chorismate + phosphate. The protein operates within metabolic intermediate biosynthesis; chorismate biosynthesis; chorismate from D-erythrose 4-phosphate and phosphoenolpyruvate: step 7/7. In terms of biological role, catalyzes the anti-1,4-elimination of the C-3 phosphate and the C-6 proR hydrogen from 5-enolpyruvylshikimate-3-phosphate (EPSP) to yield chorismate, which is the branch point compound that serves as the starting substrate for the three terminal pathways of aromatic amino acid biosynthesis. This reaction introduces a second double bond into the aromatic ring system. The sequence is that of Chorismate synthase from Parabacteroides distasonis (strain ATCC 8503 / DSM 20701 / CIP 104284 / JCM 5825 / NCTC 11152).